Here is a 615-residue protein sequence, read N- to C-terminus: Vitamin B12 transporter BtuB (615 aa).

The N-terminal stretch at 1–20 is a signal peptide; that stretch reads MIKKISLLTALSVTAFSGWA. A TonB box motif is present at residues 26–33; that stretch reads NAMVVTAN. In terms of domain architecture, TBDR plug spans 38-152; that stretch reads PVNSVLAPTT…IGGVVNIITT (115 aa). Residues serine 85, asparagine 92, and 110–111 contribute to the cyanocob(III)alamin site; that span reads IS. The TBDR beta-barrel domain occupies 155 to 615; that stretch reads KNGTTLNAGV…EYYLTGSYTF (461 aa). 3 consecutive transmembrane segments (beta stranded) span residues 158–165, 169–178, and 184–195; these read TTLNAGVG, YQSYDAATQQ, and TTATLAGNYVYT. The Ca(2+) site is built by aspartate 199, glutamine 210, aspartate 212, and aspartate 214. 2 beta stranded membrane-spanning segments follow: residues 216–226 and 231–247; these read FMSKSLYGTVE and DQFS…NRTD. Residues tyrosine 248, aspartate 249, and aspartate 255 each coordinate Ca(2+). A run of 14 beta stranded transmembrane segments spans residues 257–271, 273–290, 303–319, 322–331, 347–363, 365–375, 379–394, 397–411, 429–438, 444–453, 468–486, 490–505, 513–525, and 531–546; these read RQLY…LRYQ, GIYS…KDYD, TLVD…NVLQ, AGTVSAGVDW, ESQN…QRFA, IVLEGSVRGDD, FGWH…WEFI, YSLI…KAPN, ESKQWESGVE, VIWRVSGYRN, VYEN…TASF, PVGH…SRNA, RRAK…QLDW, and DWSV…YDKD. Threonine 303 serves as a coordination point for cyanocob(III)alamin. A cyanocob(III)alamin-binding site is contributed by arginine 513. Tyrosine 547 is a cyanocob(III)alamin binding site. 3 consecutive transmembrane segments (beta stranded) span residues 559–573, 586–597, and 603–615; these read TVKL…LAAS, IANLFDKDYETA, and AGRE…SYTF. Residues 598–615 carry the TonB C-terminal box motif; it reads YGYRTAGREYYLTGSYTF.

Belongs to the TonB-dependent receptor family. BtuB (TC 1.B.14.3.1) subfamily.

Its subcellular location is the cell outer membrane. In terms of biological role, involved in the active translocation of vitamin B12 (cyanocobalamin) across the outer membrane to the periplasmic space. It derives its energy for transport by interacting with the trans-periplasmic membrane protein TonB. The chain is Vitamin B12 transporter BtuB from Pectobacterium atrosepticum (strain SCRI 1043 / ATCC BAA-672) (Erwinia carotovora subsp. atroseptica).